The sequence spans 875 residues: Alanine--tRNA ligase (875 aa).

H564, H568, C666, and H670 together coordinate Zn(2+).

This sequence belongs to the class-II aminoacyl-tRNA synthetase family. In terms of assembly, homotetramer. The cofactor is Zn(2+).

Its subcellular location is the cytoplasm. It catalyses the reaction tRNA(Ala) + L-alanine + ATP = L-alanyl-tRNA(Ala) + AMP + diphosphate. Functionally, catalyzes the attachment of alanine to tRNA(Ala) in a two-step reaction: alanine is first activated by ATP to form Ala-AMP and then transferred to the acceptor end of tRNA(Ala). Also edits incorrectly charged Ser-tRNA(Ala) and Gly-tRNA(Ala) via its editing domain. This is Alanine--tRNA ligase from Yersinia pseudotuberculosis serotype IB (strain PB1/+).